Consider the following 249-residue polypeptide: Tetrahydromethanopterin S-methyltransferase subunit D (249 aa).

The next 6 membrane-spanning stretches (helical) occupy residues 9–29 (ILWL…VHFV), 47–67 (GTVQ…GFMM), 75–95 (LILA…MIVG), 138–158 (VSFV…ALVY), 183–203 (LVGI…VIPS), and 224–244 (AVIS…IAIS).

Belongs to the MtrD family. The complex is composed of 8 subunits; MtrA, MtrB, MtrC, MtrD, MtrE, MtrF, MtrG and MtrH.

It is found in the cell membrane. It catalyses the reaction 5-methyl-5,6,7,8-tetrahydromethanopterin + coenzyme M + 2 Na(+)(in) = 5,6,7,8-tetrahydromethanopterin + methyl-coenzyme M + 2 Na(+)(out). The protein operates within one-carbon metabolism; methanogenesis from CO(2); methyl-coenzyme M from 5,10-methylene-5,6,7,8-tetrahydromethanopterin: step 2/2. Its function is as follows. Part of a complex that catalyzes the formation of methyl-coenzyme M and tetrahydromethanopterin from coenzyme M and methyl-tetrahydromethanopterin. This is an energy-conserving, sodium-ion translocating step. This chain is Tetrahydromethanopterin S-methyltransferase subunit D, found in Methanosarcina acetivorans (strain ATCC 35395 / DSM 2834 / JCM 12185 / C2A).